Reading from the N-terminus, the 303-residue chain is Nucleotide-binding protein Dvul_1502 (303 aa).

23-30 (GLSGAGKS) is an ATP binding site. 75-78 (DLRE) is a GTP binding site.

Belongs to the RapZ-like family.

In terms of biological role, displays ATPase and GTPase activities. This Nitratidesulfovibrio vulgaris (strain DP4) (Desulfovibrio vulgaris) protein is Nucleotide-binding protein Dvul_1502.